We begin with the raw amino-acid sequence, 112 residues long: Ig kappa chain V-II region MOPC 167 (112 aa).

The segment at 1–23 is framework-1; the sequence is DIVITQDELSNPVTSGESVSISC. Residues Cys-23 and Cys-93 are joined by a disulfide bond. Residues 24-39 are complementarity-determining-1; sequence RSSKSLLYKDGKTYLN. Residues 40–54 form a framework-2 region; that stretch reads WFLQRPGQSPQLLIS. A complementarity-determining-2 region spans residues 55 to 61; sequence LMSTRAS. The framework-3 stretch occupies residues 62–93; the sequence is GVSDRFSGSGSRTDFTLEISRVKAEDVGVYYC. Residues 94-102 are complementarity-determining-3; the sequence is QQLVEYPLT. The interval 103–112 is framework-4; the sequence is FGAGTKLELK.

The chain is Ig kappa chain V-II region MOPC 167 from Mus musculus (Mouse).